The primary structure comprises 848 residues: Beta-galactosidase 13 (848 aa).

A signal peptide spans 1–27 (MKIHSSDHSWLLLAVLVILLSFSGALS). Asn-107 carries N-linked (GlcNAc...) asparagine glycosylation. Glu-200 acts as the Proton donor in catalysis. The active-site Nucleophile is the Glu-271. Asn-272, Asn-303, Asn-376, Asn-398, Asn-782, Asn-787, and Asn-817 each carry an N-linked (GlcNAc...) asparagine glycan. One can recognise an SUEL-type lectin domain in the interval 754–843 (DDVHLTANLK…KKLAVQVKCG (90 aa)).

This sequence belongs to the glycosyl hydrolase 35 family. Ubiquitous, with higher expression levels in roots, flowers and siliques.

It localises to the secreted. The protein localises to the extracellular space. The protein resides in the apoplast. It carries out the reaction Hydrolysis of terminal non-reducing beta-D-galactose residues in beta-D-galactosides.. This is Beta-galactosidase 13 (BGAL13) from Arabidopsis thaliana (Mouse-ear cress).